The following is a 354-amino-acid chain: tRNA N6-adenosine threonylcarbamoyltransferase (354 aa).

Positions 111 and 115 each coordinate Fe cation. Substrate contacts are provided by residues 134-138 (LVSGG), aspartate 167, glycine 180, and asparagine 279. Position 319 (aspartate 319) interacts with Fe cation.

The protein belongs to the KAE1 / TsaD family. Requires Fe(2+) as cofactor.

It is found in the cytoplasm. It carries out the reaction L-threonylcarbamoyladenylate + adenosine(37) in tRNA = N(6)-L-threonylcarbamoyladenosine(37) in tRNA + AMP + H(+). Required for the formation of a threonylcarbamoyl group on adenosine at position 37 (t(6)A37) in tRNAs that read codons beginning with adenine. Is involved in the transfer of the threonylcarbamoyl moiety of threonylcarbamoyl-AMP (TC-AMP) to the N6 group of A37, together with TsaE and TsaB. TsaD likely plays a direct catalytic role in this reaction. The protein is tRNA N6-adenosine threonylcarbamoyltransferase of Neisseria meningitidis.